Here is a 158-residue protein sequence, read N- to C-terminus: Small ribosomal subunit protein uS7c (158 aa).

The protein belongs to the universal ribosomal protein uS7 family. Part of the 30S ribosomal subunit.

Its subcellular location is the plastid. It is found in the chloroplast. Functionally, one of the primary rRNA binding proteins, it binds directly to 16S rRNA where it nucleates assembly of the head domain of the 30S subunit. The chain is Small ribosomal subunit protein uS7c (rps7) from Trieres chinensis (Marine centric diatom).